The sequence spans 211 residues: Uracil phosphoribosyltransferase (211 aa).

5-phospho-alpha-D-ribose 1-diphosphate-binding positions include arginine 78, arginine 103, and 130–138 (DPMLATGGT). Uracil-binding positions include isoleucine 195 and 200 to 202 (GDA). Residue aspartate 201 coordinates 5-phospho-alpha-D-ribose 1-diphosphate.

Belongs to the UPRTase family. Requires Mg(2+) as cofactor.

It catalyses the reaction UMP + diphosphate = 5-phospho-alpha-D-ribose 1-diphosphate + uracil. It participates in pyrimidine metabolism; UMP biosynthesis via salvage pathway; UMP from uracil: step 1/1. With respect to regulation, allosterically activated by GTP. Functionally, catalyzes the conversion of uracil and 5-phospho-alpha-D-ribose 1-diphosphate (PRPP) to UMP and diphosphate. This is Uracil phosphoribosyltransferase from Pseudarthrobacter chlorophenolicus (strain ATCC 700700 / DSM 12829 / CIP 107037 / JCM 12360 / KCTC 9906 / NCIMB 13794 / A6) (Arthrobacter chlorophenolicus).